Consider the following 284-residue polypeptide: Undecaprenyl-diphosphatase (284 aa).

8 helical membrane passes run M1–V21, I43–W63, Y88–F108, L116–G136, I149–G169, L193–A213, V225–V245, and F259–S279.

Belongs to the UppP family.

It is found in the cell membrane. The catalysed reaction is di-trans,octa-cis-undecaprenyl diphosphate + H2O = di-trans,octa-cis-undecaprenyl phosphate + phosphate + H(+). Functionally, catalyzes the dephosphorylation of undecaprenyl diphosphate (UPP). Confers resistance to bacitracin. The sequence is that of Undecaprenyl-diphosphatase from Cutibacterium acnes (strain DSM 16379 / KPA171202) (Propionibacterium acnes).